We begin with the raw amino-acid sequence, 475 residues long: Probable dolichyl pyrophosphate Man9GlcNAc2 alpha-1,3-glucosyltransferase (475 aa).

8 helical membrane passes run Val114 to Leu133, Gly161 to Leu181, Ala235 to Val255, Met296 to Phe316, Val322 to Val342, Leu385 to Ser405, Ile418 to Ala438, and Lys441 to Phe461.

The protein belongs to the ALG6/ALG8 glucosyltransferase family.

Its subcellular location is the endoplasmic reticulum membrane. It carries out the reaction an alpha-D-Man-(1-&gt;2)-alpha-D-Man-(1-&gt;2)-alpha-D-Man-(1-&gt;3)-[alpha-D-Man-(1-&gt;2)-alpha-D-Man-(1-&gt;3)-[alpha-D-Man-(1-&gt;2)-alpha-D-Man-(1-&gt;6)]-alpha-D-Man-(1-&gt;6)]-beta-D-Man-(1-&gt;4)-beta-D-GlcNAc-(1-&gt;4)-alpha-D-GlcNAc-diphospho-di-trans,poly-cis-dolichol + a di-trans,poly-cis-dolichyl beta-D-glucosyl phosphate = an alpha-D-Glc-(1-&gt;3)-alpha-D-Man-(1-&gt;2)-alpha-D-Man-(1-&gt;2)-alpha-D-Man-(1-&gt;3)-[alpha-D-Man-(1-&gt;2)-alpha-D-Man-(1-&gt;3)-[alpha-D-Man-(1-&gt;2)-alpha-D-Man-(1-&gt;6)]-alpha-D-Man-(1-&gt;6)]-beta-D-Man-(1-&gt;4)-beta-D-GlcNAc-(1-&gt;4)-alpha-D-GlcNAc-diphospho-di-trans,poly-cis-dolichol + a di-trans,poly-cis-dolichyl phosphate + H(+). It participates in protein modification; protein glycosylation. In terms of biological role, adds the first glucose residue to the lipid-linked oligosaccharide precursor for N-linked glycosylation. Transfers glucose from dolichyl phosphate glucose (Dol-P-Glc) onto the lipid-linked oligosaccharide Man(9)GlcNAc(2)-PP-Dol. Involved in cuticle differentiation. In Drosophila melanogaster (Fruit fly), this protein is Probable dolichyl pyrophosphate Man9GlcNAc2 alpha-1,3-glucosyltransferase (gny).